The primary structure comprises 248 residues: MILELDCGNSFIKWRVISPGGRERICAGIVDSDDGLFEALAGSGVKVQRCRLVSVRSDAETEQLVTRLKASLGVEVVCAQSSSQVGGVRNGYHDYQRLGLDRWLALLGGYHLGQRACLVVDLGTAVTADFVSADGEHLGGFICPGLPLMRDQLSTHTRRIRYDREVALAALQELEPGRSTAEAVERGCLLMLRGFVAEQLAQARSRFPGGFEVFLTGGDAELVRDAVPEAQVVPDLVFVGLAIACPLS.

6–13 (DCGNSFIK) contributes to the ATP binding site. Substrate is bound by residues tyrosine 92 and 99-102 (GLDR). Aspartate 101 serves as the catalytic Proton acceptor. Aspartate 121 contacts K(+). Threonine 124 contributes to the ATP binding site. Threonine 180 is a substrate binding site.

The protein belongs to the type III pantothenate kinase family. As to quaternary structure, homodimer. Requires NH4(+) as cofactor. K(+) serves as cofactor.

The protein resides in the cytoplasm. It carries out the reaction (R)-pantothenate + ATP = (R)-4'-phosphopantothenate + ADP + H(+). It participates in cofactor biosynthesis; coenzyme A biosynthesis; CoA from (R)-pantothenate: step 1/5. Its function is as follows. Catalyzes the phosphorylation of pantothenate (Pan), the first step in CoA biosynthesis. The chain is Type III pantothenate kinase from Ectopseudomonas mendocina (strain ymp) (Pseudomonas mendocina).